The primary structure comprises 115 residues: Large ribosomal subunit protein uL18 (115 aa).

It belongs to the universal ribosomal protein uL18 family. Part of the 50S ribosomal subunit; part of the 5S rRNA/L5/L18/L25 subcomplex. Contacts the 5S and 23S rRNAs.

Functionally, this is one of the proteins that bind and probably mediate the attachment of the 5S RNA into the large ribosomal subunit, where it forms part of the central protuberance. This chain is Large ribosomal subunit protein uL18, found in Ruthia magnifica subsp. Calyptogena magnifica.